Consider the following 715-residue polypeptide: Inducible lysine decarboxylase (715 aa).

At lysine 367 the chain carries N6-(pyridoxal phosphate)lysine.

The protein belongs to the Orn/Lys/Arg decarboxylase class-I family. Homodecamer. Interacts with RavA. Requires pyridoxal 5'-phosphate as cofactor.

The protein localises to the cytoplasm. The enzyme catalyses L-lysine + H(+) = cadaverine + CO2. The protein is Inducible lysine decarboxylase (cadA) of Escherichia coli O157:H7.